The primary structure comprises 250 residues: NADH-quinone oxidoreductase subunit C (250 aa).

Belongs to the complex I 30 kDa subunit family. In terms of assembly, NDH-1 is composed of 14 different subunits. Subunits NuoB, C, D, E, F, and G constitute the peripheral sector of the complex.

The protein localises to the cell inner membrane. It carries out the reaction a quinone + NADH + 5 H(+)(in) = a quinol + NAD(+) + 4 H(+)(out). Functionally, NDH-1 shuttles electrons from NADH, via FMN and iron-sulfur (Fe-S) centers, to quinones in the respiratory chain. The immediate electron acceptor for the enzyme in this species is believed to be ubiquinone. Couples the redox reaction to proton translocation (for every two electrons transferred, four hydrogen ions are translocated across the cytoplasmic membrane), and thus conserves the redox energy in a proton gradient. This chain is NADH-quinone oxidoreductase subunit C, found in Xanthomonas campestris pv. campestris (strain 8004).